The primary structure comprises 433 residues: MAGQTIIVSGLNPAAILQSTIGGGASPTAAAAAENGTRKVIPLSRDALQDFMLSIITQKLQDEKQPFYVLDLGEVVSLMDQWKSALPNIRPFYAVKCNPEPSFLSILSAMGSNFDCASRAEIEYVLSLGISPDRIVFANPCKPESDIIFAAKVGVNLTTYDSEDEVYKIRKHHPKSELLLRIKPMLDGNARCPMGPKYGALPEEVDPLLRAAQAARLTVSGVSFHIGSGDADSNAYLGAIAAAKEVFETAAKLGMSKMTVLDVGGGFTSGHQFTTAAVAVKSALKQHFDDEPELTIIAEPGRFFAETAFTLATTIIGKRVRGELREYWINDGLYGSMNCVLYDHATVNATPLAVLSNRSNVTCGGSKTFPTTVFGPTCDALDTVLRDYQLPELQVNDWLVFPNMGAYTKAAGSNFNGFNTSAIVTHLAYSYPS.

Lys96 carries the N6-(pyridoxal phosphate)lysine modification. Pyridoxal 5'-phosphate is bound by residues Ser228, Gly266, and 299-302 (EPGR). Position 342-343 (342-343 (YD)) interacts with substrate. The active-site Proton donor; shared with dimeric partner is the Cys378. Residue Asp379 participates in substrate binding. A pyridoxal 5'-phosphate-binding site is contributed by Tyr407.

The protein belongs to the Orn/Lys/Arg decarboxylase class-II family. In terms of assembly, homodimer. Only the dimer is catalytically active, as the active sites are constructed of residues from both monomers. Requires pyridoxal 5'-phosphate as cofactor.

It localises to the plastid. The protein resides in the chloroplast. The enzyme catalyses L-ornithine + H(+) = putrescine + CO2. It functions in the pathway alkaloid biosynthesis; nicotine biosynthesis. It participates in amine and polyamine biosynthesis; putrescine biosynthesis via L-ornithine pathway; putrescine from L-ornithine: step 1/1. Involved in the biosynthesis of pyridine alkaloid natural products, leading mainly to the production of anabasine, anatabine, nicotine and nornicotine, effective deterrents against herbivores with antiparasitic and pesticide properties (neurotoxins); nornicotine serves as the precursor in the synthesis of the carcinogen compound N'-nitrosonornicotine (NNN). Catalyzes the first and rate-limiting step of polyamine biosynthesis that converts ornithine into putrescine, which is the precursor for the polyamines, spermidine and spermine. Polyamines are essential for cell proliferation and are implicated in cellular processes, ranging from DNA replication to apoptosis. The protein is Ornithine decarboxylase 1B, chloroplastic of Nicotiana tabacum (Common tobacco).